Consider the following 1043-residue polypeptide: Chitin synthase 2 (1043 aa).

Positions 1 to 10 (MAQESSNMDQ) are enriched in polar residues. Disordered regions lie at residues 1–133 (MAQE…PRRP) and 215–234 (ESDF…ERRG). Residues 11-21 (SKSDNVTDNKP) show a composition bias toward basic and acidic residues. Low complexity predominate over residues 43–58 (SASTSSLPTSRPSSSP). 2 stretches are compositionally biased toward polar residues: residues 59–73 (GQSP…TSDT) and 81–93 (VSPT…SRGS). 6 helical membrane passes run 663–683 (FVSL…FYFI), 703–723 (IFAI…VLSM), 738–758 (MIIY…MVVM), 780–800 (YIIV…FLYL), 907–927 (YMVS…SEAF), and 931–951 (SVGN…LAVF).

It belongs to the chitin synthase family. Class II subfamily.

It is found in the cell membrane. It catalyses the reaction [(1-&gt;4)-N-acetyl-beta-D-glucosaminyl](n) + UDP-N-acetyl-alpha-D-glucosamine = [(1-&gt;4)-N-acetyl-beta-D-glucosaminyl](n+1) + UDP + H(+). Functionally, polymerizes chitin, a structural polymer of the cell wall and septum, by transferring the sugar moiety of UDP-GlcNAc to the non-reducing end of the growing chitin polymer. This is Chitin synthase 2 (CHS2) from Paracoccidioides brasiliensis.